Here is a 963-residue protein sequence, read N- to C-terminus: Protein suppressor of white apricot (963 aa).

The SURP motif 1 repeat unit spans residues 234 to 276 (IIEKTARFIATQGAQMEILIKAKQANNTQFDFLTQGGHLQPYY). 2 disordered regions span residues 290 to 322 (PAPQ…RRNP) and 360 to 430 (EDES…EPPQ). Over residues 300 to 317 (NTDKEAPSADDHSEEVAG) the composition is skewed to basic and acidic residues. Residues 364–375 (SNPGNSQHSGGT) are compositionally biased toward polar residues. A compositionally biased stretch (basic and acidic residues) spans 407–418 (THEEESSNREQQ). Ser-438, Ser-447, Ser-448, and Ser-450 each carry phosphoserine. Residues 445-470 (NYSSESEEEEDQVQPEKEEEKKPEPV) are disordered. The segment covering 458–468 (QPEKEEEKKPE) has biased composition (basic and acidic residues). One copy of the SURP motif 2 repeat lies at 483–523 (IIDKTATYVIKNGRQFEETLRTKSVDRFSFLLPANEYYPYY). Disordered stretches follow at residues 593–613 (PQEA…HVRP), 634–662 (TAGQ…ERVK), and 716–963 (PPES…SSSP). Positions 637–651 (QKGNITASPSCSSPQ) are enriched in polar residues. Ser-649 carries the post-translational modification Phosphoserine. Basic and acidic residues predominate over residues 652–662 (KEQRQAEERVK). A compositionally biased stretch (low complexity) spans 718–727 (ESAAGAATAD). Positions 768-778 (DEEDDDEEDGG) are enriched in acidic residues. Residues 787–796 (NDDSTNTFTS) are compositionally biased toward polar residues. A compositionally biased stretch (pro residues) spans 799–809 (VLPPTAAPPPA). Residues 820–830 (QLVATTSTRSS) are compositionally biased toward low complexity. A compositionally biased stretch (basic residues) spans 831-847 (SSRHLKTHRRSRSRSKN). The segment covering 848-858 (VRSSDSSPSSR) has biased composition (low complexity). Composition is skewed to basic residues over residues 861-870 (SRRRRQKSSR) and 882-913 (KSQH…RRSR). A phosphoserine mark is found at Ser-912, Ser-914, and Ser-916. Residues 934–944 (AEQRRQQDRRR) show a composition bias toward basic and acidic residues. The span at 945–963 (TPTKKSHKRHKRRRRSSSP) shows a compositional bias: basic residues.

Its subcellular location is the nucleus speckle. In terms of biological role, regulator of pre-mRNA splicing (and, possibly, of other RNA processing events). Regulates its own expression at the level of RNA processing. The sequence is that of Protein suppressor of white apricot (su(w[a])) from Drosophila melanogaster (Fruit fly).